The primary structure comprises 196 residues: MARSFYSHIKEAWEDPDDGKLAELQWQRKQDWRKEGAIERVDRPTRLDKARELGYKAKQGVVVVRVSVRKGTARKSRFKAGRRTKRQGVNRIGRAKNLQRIAEERASRKYVNLRTLNSYWVGEDGSQKWFEAILLDPEHGAIQNDDDLNWICDDSHKNRVFRGKTSAGRRARGLQNRGKGTEGLRPSTNADKRNKS.

Residues arginine 162–arginine 172 show a composition bias toward basic residues. Residues arginine 162–serine 196 are disordered.

It belongs to the eukaryotic ribosomal protein eL15 family.

The polypeptide is Large ribosomal subunit protein eL15 (Halobacterium salinarum (strain ATCC 29341 / DSM 671 / R1)).